Reading from the N-terminus, the 419-residue chain is Tyrosine--tRNA ligase (419 aa).

L-tyrosine is bound at residue Tyr-34. The short motif at 39-48 (PSGDSMHIGH) is the 'HIGH' region element. Tyr-168 and Gln-172 together coordinate L-tyrosine. Residues 230 to 234 (KFGKS) carry the 'KMSKS' region motif. Lys-233 contributes to the ATP binding site. An S4 RNA-binding domain is found at 352–418 (VNLVDWLVSL…GKKKYFLVSY (67 aa)).

It belongs to the class-I aminoacyl-tRNA synthetase family. TyrS type 1 subfamily. In terms of assembly, homodimer.

Its subcellular location is the cytoplasm. The catalysed reaction is tRNA(Tyr) + L-tyrosine + ATP = L-tyrosyl-tRNA(Tyr) + AMP + diphosphate + H(+). Functionally, catalyzes the attachment of tyrosine to tRNA(Tyr) in a two-step reaction: tyrosine is first activated by ATP to form Tyr-AMP and then transferred to the acceptor end of tRNA(Tyr). The sequence is that of Tyrosine--tRNA ligase from Listeria welshimeri serovar 6b (strain ATCC 35897 / DSM 20650 / CCUG 15529 / CIP 8149 / NCTC 11857 / SLCC 5334 / V8).